We begin with the raw amino-acid sequence, 517 residues long: Protein disulfide isomerase-like 1-2 (517 aa).

The first 23 residues, 1–23 (MAVNLVLSFALAILISSSPTAVG), serve as a signal peptide directing secretion. The 120-residue stretch at 24-143 (VDATEELKEA…IVEYLKRQVG (120 aa)) folds into the Thioredoxin 1 domain. Asn41 carries an N-linked (GlcNAc...) asparagine glycan. Catalysis depends on nucleophile residues Cys61 and Cys64. Cys61 and Cys64 are joined by a disulfide. Asn301 carries an N-linked (GlcNAc...) asparagine glycan. Positions 357–484 (VEYGNLTPYV…IISFINENRG (128 aa)) constitute a Thioredoxin 2 domain. Catalysis depends on nucleophile residues Cys407 and Cys410. A disulfide bond links Cys407 and Cys410. The short motif at 514–517 (KDEL) is the Prevents secretion from ER element.

This sequence belongs to the protein disulfide isomerase family.

Its subcellular location is the endoplasmic reticulum lumen. It carries out the reaction Catalyzes the rearrangement of -S-S- bonds in proteins.. Functionally, acts as a protein-folding catalyst that interacts with nascent polypeptides to catalyze the formation, isomerization, and reduction or oxidation of disulfide bonds. May play a role in storage protein biogenesis. The chain is Protein disulfide isomerase-like 1-2 (PDIL1-2) from Oryza sativa subsp. japonica (Rice).